The chain runs to 860 residues: Leucine--tRNA ligase (860 aa).

The 'HIGH' region signature appears at 42 to 52 (PYPSGRLHMGH). Positions 619 to 623 (KMSKS) match the 'KMSKS' region motif. Residue lysine 622 participates in ATP binding.

This sequence belongs to the class-I aminoacyl-tRNA synthetase family.

It is found in the cytoplasm. The catalysed reaction is tRNA(Leu) + L-leucine + ATP = L-leucyl-tRNA(Leu) + AMP + diphosphate. This chain is Leucine--tRNA ligase, found in Cronobacter sakazakii (strain ATCC BAA-894) (Enterobacter sakazakii).